A 560-amino-acid polypeptide reads, in one-letter code: Formate--tetrahydrofolate ligase (560 aa).

69-76 (TPAGEGKS) contacts ATP.

It belongs to the formate--tetrahydrofolate ligase family.

The enzyme catalyses (6S)-5,6,7,8-tetrahydrofolate + formate + ATP = (6R)-10-formyltetrahydrofolate + ADP + phosphate. It functions in the pathway one-carbon metabolism; tetrahydrofolate interconversion. The chain is Formate--tetrahydrofolate ligase from Listeria welshimeri serovar 6b (strain ATCC 35897 / DSM 20650 / CCUG 15529 / CIP 8149 / NCTC 11857 / SLCC 5334 / V8).